We begin with the raw amino-acid sequence, 140 residues long: Large ribosomal subunit protein bL17 (140 aa).

Belongs to the bacterial ribosomal protein bL17 family. Part of the 50S ribosomal subunit. Contacts protein L32.

The chain is Large ribosomal subunit protein bL17 from Beijerinckia indica subsp. indica (strain ATCC 9039 / DSM 1715 / NCIMB 8712).